The sequence spans 1345 residues: MPCPSQSSDELEFFVNGKKVTEKNVDPEVTLLAFLRKNLRLTGTKYACGTGSCGACTVMVSQHDPVCKKTRHFSVMACLVPLCSLHGAAVTTVEGVGSIKTRLHPVQERLAKSHGTQCGFCSPGMVMSMYALLRNHPQPSEEQLLEALGGNLCRCTGYRPILESGRTFCMESDGCLQKGTGQCCLDQKEGDSSGSKSDICTELFVKDEFQPLDPTQELIFPPELLRMAENPEKQTLTFYGERITWIAPGTLQELLVLKAKYPEAPLISGNTALGPAMKSQGHFYPVLLSPARIPDLRMVTKTSGGLTIGACCSLAQVKDVLAESISELPEEKTQTYRALLKHLRSLAGQQIRNMASLGGHVISRHYYSDLNPILSVGNATLNLLSEEGLRQIPLNGHFLAGLANEDLKPEEILGSVYIPHSQKREFVSAFRQAQCHQNALPDVNAGMRVLFKEGTDIIEELSIAYGGVGPTTVSAHRSCQQLLGRRWNALLLDEACRLLLDEVSLPGSAVGGKVEFRRTLIVSFFFKFYLEVLQELKADKRLLPESTDSQRYPEIADGSRSSLGDFQVTLPQGVQTYQRVNSHQPLQDPVGRPIMHLSGLKHATGEAVFCDDIPRVDKELFMALVTSTRAHARIISIDSSEVLDLPGVVDVITAEDIPGNNGEEDDKLLAVDKVLCVGQVVCAVVAETDVQAKRATKKIKITYEDLKPVLFTIEDAIQHNSFLCPEKKLEQGNMEEAFENVDQIVEGKVHVGGQEHFYMETQRVLVIPKTEDKELDMYVSTQDPAHVQKTVSSALNIPLSRITCHVKRVGGGFGGKVGRPAVFGAIAAVGAVKTGRPIRLVLDREDDMLITGGRHPLFAKYKVGFMNSGRIKALDIECYINGGCTLDDSELVTEFLVLKLENAYKIRNLRLRGRACMTNLPSNTAFRGFGFPQGALVTESCITAVAAKCGLPPEKIREKNMYKTVDKTIYKQAFNPEPLIRCWNECLDKSSFAIRRTRVDEFNKKSYWRKRGIAVVPMKFSVGFAATSYHQAAALVHIYTDGSVLVAHGGNELGQGIHTKMLQVASRELKIPMSYLHTSETCTAAVPNTIATAASVGADVNGRAVQNACQILLKRLEPVIKKNPEGTWRDWIEAAFEQRISLSATGYNRGYKAFMDWEKGEGDPFPYYVYGAACSEVEIDCLTGAHKKMRTDIVMDACCSLNPAIDVGQIEGAFIQGMGLYTTEDVHYSPEGVLYSRSPDKYKIPTVTDVPEQFNVSLLPSSQTPLTIYSSKGLGESGMFLGSSVFFAIADAVAAARRQRDIAEDFTVKSPATPERVRMACADRFTDMIPRDDPKTFKPWSIPIA.

One can recognise a 2Fe-2S ferredoxin-type domain in the interval Asp9–Val96. [2Fe-2S] cluster-binding residues include Cys48, Cys53, Cys56, and Cys78. Gln117 contacts Mo-molybdopterin. The [2Fe-2S] cluster site is built by Cys118, Cys121, Cys153, and Cys155. Cys155 provides a ligand contact to Mo-molybdopterin. An FAD-binding PCMH-type domain is found at Phe238–Lys423. Residues Leu266–Leu273, Ala347, Ser356, His360, Asp369, and Leu413 contribute to the FAD site. Mo-molybdopterin-binding positions include Gly812 to Phe813, Ala1094 to Gly1097, Gln1209, and Leu1274. Residue Glu1276 is the Proton acceptor; for azaheterocycle hydroxylase activity of the active site.

It belongs to the xanthine dehydrogenase family. As to quaternary structure, homodimer. [2Fe-2S] cluster is required as a cofactor. The cofactor is FAD. It depends on Mo-molybdopterin as a cofactor.

The protein resides in the cytoplasm. It catalyses the reaction an aldehyde + O2 + H2O = a carboxylate + H2O2 + H(+). Its function is as follows. Oxidase with broad substrate specificity, oxidizing aromatic azaheterocycles, such as phthalazine, as well as aldehydes, such as benzaldehyde and retinal. The sequence is that of Aldehyde oxidase 2 (Aox2) from Rattus norvegicus (Rat).